Consider the following 874-residue polypeptide: Alanine--tRNA ligase (874 aa).

4 residues coordinate Zn(2+): His-562, His-566, Cys-665, and His-669.

The protein belongs to the class-II aminoacyl-tRNA synthetase family. The cofactor is Zn(2+).

It localises to the cytoplasm. The catalysed reaction is tRNA(Ala) + L-alanine + ATP = L-alanyl-tRNA(Ala) + AMP + diphosphate. Functionally, catalyzes the attachment of alanine to tRNA(Ala) in a two-step reaction: alanine is first activated by ATP to form Ala-AMP and then transferred to the acceptor end of tRNA(Ala). Also edits incorrectly charged Ser-tRNA(Ala) and Gly-tRNA(Ala) via its editing domain. The chain is Alanine--tRNA ligase from Pseudomonas putida (strain GB-1).